The primary structure comprises 503 residues: ATP synthase subunit alpha (503 aa).

170–177 is a binding site for ATP; the sequence is GDKQTGKT.

The protein belongs to the ATPase alpha/beta chains family. As to quaternary structure, F-type ATPases have 2 components, CF(1) - the catalytic core - and CF(0) - the membrane proton channel. CF(1) has five subunits: alpha(3), beta(3), gamma(1), delta(1), epsilon(1). CF(0) has three main subunits: a(1), b(2) and c(9-12). The alpha and beta chains form an alternating ring which encloses part of the gamma chain. CF(1) is attached to CF(0) by a central stalk formed by the gamma and epsilon chains, while a peripheral stalk is formed by the delta and b chains.

The protein resides in the cell inner membrane. It carries out the reaction ATP + H2O + 4 H(+)(in) = ADP + phosphate + 5 H(+)(out). In terms of biological role, produces ATP from ADP in the presence of a proton gradient across the membrane. The alpha chain is a regulatory subunit. The polypeptide is ATP synthase subunit alpha (Helicobacter pylori (strain J99 / ATCC 700824) (Campylobacter pylori J99)).